The following is a 328-amino-acid chain: MLEDYYPSTTSYYHGGIDDDLYTAKWGMVMTFLDLNDSSLTPFEGTHFALIGFKSDKGVYINNGRVGAVESPAAIRTQLAKFPWHLGNQVMVYDVGNIDGPNRSLEQLQNSLSKAIKRMCDLNLKPIVLGGGHETAYGHYLGLRQSLSPSDDLAVINMDAHFDLRPYDQTGPNSGTGFRQMFDDAVADKRLFKYFVLGIQEHNNNLFLFDFVAKSKGIQFLTGQDIYQMGHQKVCRAIDRFLEGQERVYLTIDMDCFSVGAAPGVSAIQSLGVDPNLAVLVLQHIAASGKLVGFDVVEVSPPHDIDNHTANLAATFIFYLVQIMAQHS.

The Mn(2+) site is built by H133, D159, H161, D163, D253, and D255.

The protein belongs to the arginase family. Mn(2+) is required as a cofactor.

It catalyses the reaction N-formimidoyl-L-glutamate + H2O = formamide + L-glutamate. Its pathway is amino-acid degradation; L-histidine degradation into L-glutamate; L-glutamate from N-formimidoyl-L-glutamate (hydrolase route): step 1/1. Its function is as follows. Catalyzes the conversion of N-formimidoyl-L-glutamate to L-glutamate and formamide. The sequence is that of Formimidoylglutamase from Streptococcus pyogenes serotype M1.